Reading from the N-terminus, the 122-residue chain is NADH-ubiquinone oxidoreductase chain 3 (122 aa).

3 helical membrane-spanning segments follow: residues 12–32 (VLIF…LSYV), 66–86 (LVAI…PWAV), and 91–111 (VTIF…VGFI).

The protein belongs to the complex I subunit 3 family.

It localises to the mitochondrion membrane. The enzyme catalyses a ubiquinone + NADH + 5 H(+)(in) = a ubiquinol + NAD(+) + 4 H(+)(out). Its function is as follows. Core subunit of the mitochondrial membrane respiratory chain NADH dehydrogenase (Complex I) that is believed to belong to the minimal assembly required for catalysis. Complex I functions in the transfer of electrons from NADH to the respiratory chain. The immediate electron acceptor for the enzyme is believed to be ubiquinone. This chain is NADH-ubiquinone oxidoreductase chain 3 (NAD3), found in Reclinomonas americana.